Consider the following 226-residue polypeptide: 2-C-methyl-D-erythritol 4-phosphate cytidylyltransferase (226 aa).

It belongs to the IspD/TarI cytidylyltransferase family. IspD subfamily.

It catalyses the reaction 2-C-methyl-D-erythritol 4-phosphate + CTP + H(+) = 4-CDP-2-C-methyl-D-erythritol + diphosphate. The protein operates within isoprenoid biosynthesis; isopentenyl diphosphate biosynthesis via DXP pathway; isopentenyl diphosphate from 1-deoxy-D-xylulose 5-phosphate: step 2/6. Its function is as follows. Catalyzes the formation of 4-diphosphocytidyl-2-C-methyl-D-erythritol from CTP and 2-C-methyl-D-erythritol 4-phosphate (MEP). In Bacillus cytotoxicus (strain DSM 22905 / CIP 110041 / 391-98 / NVH 391-98), this protein is 2-C-methyl-D-erythritol 4-phosphate cytidylyltransferase.